Here is a 544-residue protein sequence, read N- to C-terminus: CTP synthase (544 aa).

Residues 1–267 are amidoligase domain; the sequence is MSKFIFVTGG…GDLLVSRLHL (267 aa). Residue serine 13 participates in CTP binding. Serine 13 is a binding site for UTP. Position 14–19 (14–19) interacts with ATP; that stretch reads SVGKGI. An L-glutamine-binding site is contributed by tyrosine 54. ATP is bound at residue aspartate 71. Residues aspartate 71 and glutamate 141 each coordinate Mg(2+). CTP-binding positions include 148 to 150, 188 to 193, and lysine 224; these read DIE and KTKPTQ. Residues 188–193 and lysine 224 contribute to the UTP site; that span reads KTKPTQ. A Glutamine amidotransferase type-1 domain is found at 299 to 534; sequence YVELKDAYYS…INAAKKVIRD (236 aa). An L-glutamine-binding site is contributed by glycine 354. Cysteine 381 acts as the Nucleophile; for glutamine hydrolysis in catalysis. Residues 382 to 385, glutamate 405, and arginine 462 each bind L-glutamine; that span reads LGMQ. Catalysis depends on residues histidine 507 and glutamate 509.

This sequence belongs to the CTP synthase family. In terms of assembly, homotetramer.

The catalysed reaction is UTP + L-glutamine + ATP + H2O = CTP + L-glutamate + ADP + phosphate + 2 H(+). It carries out the reaction L-glutamine + H2O = L-glutamate + NH4(+). It catalyses the reaction UTP + NH4(+) + ATP = CTP + ADP + phosphate + 2 H(+). It functions in the pathway pyrimidine metabolism; CTP biosynthesis via de novo pathway; CTP from UDP: step 2/2. Its activity is regulated as follows. Allosterically activated by GTP, when glutamine is the substrate; GTP has no effect on the reaction when ammonia is the substrate. The allosteric effector GTP functions by stabilizing the protein conformation that binds the tetrahedral intermediate(s) formed during glutamine hydrolysis. Inhibited by the product CTP, via allosteric rather than competitive inhibition. Its function is as follows. Catalyzes the ATP-dependent amination of UTP to CTP with either L-glutamine or ammonia as the source of nitrogen. Regulates intracellular CTP levels through interactions with the four ribonucleotide triphosphates. This Dehalococcoides mccartyi (strain ATCC BAA-2100 / JCM 16839 / KCTC 5957 / BAV1) protein is CTP synthase.